Reading from the N-terminus, the 136-residue chain is Histone H3.2 (136 aa).

Positions methionine 1–arginine 43 are disordered. N6,N6,N6-trimethyllysine; alternate is present on residues lysine 5 and lysine 10. An N6,N6-dimethyllysine; alternate mark is found at lysine 5 and lysine 10. Residues lysine 5 and lysine 10 each carry the N6-methyllysine; alternate modification. Lysine 10 is modified (N6-acetyllysine; alternate). Phosphoserine is present on serine 11. The residue at position 12 (threonine 12) is a Phosphothreonine. Position 15 is an N6-acetyllysine (lysine 15). Lysine 19, lysine 24, and lysine 28 each carry N6-methyllysine; alternate. N6-acetyllysine; alternate occurs at positions 19 and 24. Lysine 28 is subject to N6,N6,N6-trimethyllysine; alternate. Lysine 28 bears the N6,N6-dimethyllysine; alternate mark. Serine 29 carries the phosphoserine modification. Lysine 37 carries the N6,N6,N6-trimethyllysine; alternate modification. Residue lysine 37 is modified to N6,N6-dimethyllysine; alternate. Lysine 37 bears the N6-methyllysine; alternate mark.

This sequence belongs to the histone H3 family. The nucleosome is a histone octamer containing two molecules each of H2A, H2B, H3 and H4 assembled in one H3-H4 heterotetramer and two H2A-H2B heterodimers. The octamer wraps approximately 147 bp of DNA. Post-translationally, acetylation is generally linked to gene activation. Can be acetylated to form H3K9ac, H3K14ac, H3K18ac and H3K23ac. H3K9ac could compete with H3K9me and prevent gene silencing. H3K9ac is restricted to euchromatin. In terms of processing, methylated to form mainly H3K4me, H3K9me, H3K18me, H3K23me, H3K27me and H3K36me. H3K4me1/2/3, H3K9me3, H3K27me3 and H3K36me1/2/3 are typical marks for euchromatin, whereas heterochromatic chromocenters are enriched in H3K9me1/2 and H3K27me1/2. H2BK143ub1 is probably prerequisite for H3K4me. Can be phosphorylated to form H3S10ph, H3T11ph and H3S28ph.

The protein resides in the nucleus. It localises to the chromosome. In terms of biological role, core component of nucleosome. Nucleosomes wrap and compact DNA into chromatin, limiting DNA accessibility to the cellular machineries which require DNA as a template. Histones thereby play a central role in transcription regulation, DNA repair, DNA replication and chromosomal stability. DNA accessibility is regulated via a complex set of post-translational modifications of histones, also called histone code, and nucleosome remodeling. The protein is Histone H3.2 of Brassica napus (Rape).